The primary structure comprises 212 residues: Ribosomal RNA small subunit methyltransferase G (212 aa).

Residues Gly72, Leu77, 123 to 124 (VE), and Arg138 each bind S-adenosyl-L-methionine.

This sequence belongs to the methyltransferase superfamily. RNA methyltransferase RsmG family.

The protein resides in the cytoplasm. It carries out the reaction guanosine(527) in 16S rRNA + S-adenosyl-L-methionine = N(7)-methylguanosine(527) in 16S rRNA + S-adenosyl-L-homocysteine. Functionally, specifically methylates the N7 position of guanine in position 527 of 16S rRNA. This chain is Ribosomal RNA small subunit methyltransferase G, found in Histophilus somni (strain 129Pt) (Haemophilus somnus).